An 882-amino-acid chain; its full sequence is DNA mismatch repair protein MutS (882 aa).

Residue 627–634 (GPNMAGKS) coordinates ATP.

Belongs to the DNA mismatch repair MutS family.

Its function is as follows. This protein is involved in the repair of mismatches in DNA. It is possible that it carries out the mismatch recognition step. This protein has a weak ATPase activity. The polypeptide is DNA mismatch repair protein MutS (Anaeromyxobacter sp. (strain K)).